The following is a 23-amino-acid chain: Magainin-R1 (23 aa).

Expressed by the skin glands.

The protein localises to the secreted. Antimicrobial peptide. This chain is Magainin-R1, found in Xenopus ruwenzoriensis (Uganda clawed frog).